The primary structure comprises 231 residues: Large ribosomal subunit protein uL1 (231 aa).

The protein belongs to the universal ribosomal protein uL1 family. As to quaternary structure, part of the 50S ribosomal subunit.

Functionally, binds directly to 23S rRNA. The L1 stalk is quite mobile in the ribosome, and is involved in E site tRNA release. In terms of biological role, protein L1 is also a translational repressor protein, it controls the translation of the L11 operon by binding to its mRNA. This Neisseria meningitidis serogroup C (strain 053442) protein is Large ribosomal subunit protein uL1.